A 401-amino-acid polypeptide reads, in one-letter code: Glutamyl-tRNA reductase (401 aa).

Substrate-binding positions include 45 to 48 (TCNR), S101, 106 to 108 (EDQ), and Q112. C46 acts as the Nucleophile in catalysis. 177–182 (GYGEVG) is an NADP(+) binding site.

The protein belongs to the glutamyl-tRNA reductase family. In terms of assembly, homodimer.

It carries out the reaction (S)-4-amino-5-oxopentanoate + tRNA(Glu) + NADP(+) = L-glutamyl-tRNA(Glu) + NADPH + H(+). The protein operates within porphyrin-containing compound metabolism; protoporphyrin-IX biosynthesis; 5-aminolevulinate from L-glutamyl-tRNA(Glu): step 1/2. Its function is as follows. Catalyzes the NADPH-dependent reduction of glutamyl-tRNA(Glu) to glutamate 1-semialdehyde (GSA). This chain is Glutamyl-tRNA reductase, found in Clostridium beijerinckii (strain ATCC 51743 / NCIMB 8052) (Clostridium acetobutylicum).